The sequence spans 272 residues: uncharacterized protein (272 aa).

Basic and acidic residues-rich tracts occupy residues 136-156 (VRRE…HIDI) and 231-240 (GCKESRRNEP). 2 disordered regions span residues 136-157 (VRRE…IDIH) and 174-272 (VKPK…WAAF). Polar residues predominate over residues 243–252 (DLSQLKKNLP). The span at 253–272 (STAGSGSSKSTGAASGWAAF) shows a compositional bias: low complexity.

This is an uncharacterized protein from Arabidopsis thaliana (Mouse-ear cress).